The chain runs to 750 residues: Photosystem I P700 chlorophyll a apoprotein A1 (750 aa).

8 helical membrane passes run 70-93 (VFSA…FHGA), 156-179 (LYCT…FHYH), 195-219 (LNHH…HVSL), 291-309 (IAHH…GHMY), 346-369 (WHAQ…HHMY), 385-411 (LSLF…IFMV), 433-455 (AIIS…LYIH), and 531-549 (FLVH…LILL). Positions 573 and 582 each coordinate [4Fe-4S] cluster. The next 2 membrane-spanning stretches (helical) occupy residues 589–610 (HVFL…HFSW) and 664–686 (LSAY…MFLF). H675 provides a ligand contact to chlorophyll a'. Chlorophyll a is bound by residues M683 and Y691. W692 contributes to the phylloquinone binding site. A helical transmembrane segment spans residues 724-744 (AVGVTHYLLGGIATTWAFFLA).

This sequence belongs to the PsaA/PsaB family. The PsaA/B heterodimer binds the P700 chlorophyll special pair and subsequent electron acceptors. PSI consists of a core antenna complex that captures photons, and an electron transfer chain that converts photonic excitation into a charge separation. The eukaryotic PSI reaction center is composed of at least 11 subunits. It depends on P700 is a chlorophyll a/chlorophyll a' dimer, A0 is one or more chlorophyll a, A1 is one or both phylloquinones and FX is a shared 4Fe-4S iron-sulfur center. as a cofactor.

It is found in the plastid. Its subcellular location is the chloroplast thylakoid membrane. It carries out the reaction reduced [plastocyanin] + hnu + oxidized [2Fe-2S]-[ferredoxin] = oxidized [plastocyanin] + reduced [2Fe-2S]-[ferredoxin]. PsaA and PsaB bind P700, the primary electron donor of photosystem I (PSI), as well as the electron acceptors A0, A1 and FX. PSI is a plastocyanin-ferredoxin oxidoreductase, converting photonic excitation into a charge separation, which transfers an electron from the donor P700 chlorophyll pair to the spectroscopically characterized acceptors A0, A1, FX, FA and FB in turn. Oxidized P700 is reduced on the lumenal side of the thylakoid membrane by plastocyanin. In Atropa belladonna (Belladonna), this protein is Photosystem I P700 chlorophyll a apoprotein A1.